We begin with the raw amino-acid sequence, 191 residues long: Large ribosomal subunit protein bL25 (191 aa).

The protein belongs to the bacterial ribosomal protein bL25 family. CTC subfamily. Part of the 50S ribosomal subunit; part of the 5S rRNA/L5/L18/L25 subcomplex. Contacts the 5S rRNA. Binds to the 5S rRNA independently of L5 and L18.

Functionally, this is one of the proteins that binds to the 5S RNA in the ribosome where it forms part of the central protuberance. This chain is Large ribosomal subunit protein bL25, found in Nitratidesulfovibrio vulgaris (strain DSM 19637 / Miyazaki F) (Desulfovibrio vulgaris).